We begin with the raw amino-acid sequence, 272 residues long: Soluble interferon gamma receptor OPG193 (272 aa).

A signal peptide spans 1–13; that stretch reads MRYIIILAVLFIN. Asn-42, Asn-150, and Asn-267 each carry an N-linked (GlcNAc...) asparagine; by host glycan.

Belongs to the type II cytokine receptor family. Homodimer. Interacts with host IFNG.

The protein resides in the secreted. Functionally, counteracts the antiviral effects of host IFN-gamma. Acts as a soluble IFN-gamma receptor and thus inhibits the interaction between host IFN-gamma and its receptor. The polypeptide is Soluble interferon gamma receptor OPG193 (OPG193) (Homo sapiens (Human)).